A 100-amino-acid chain; its full sequence is Urease subunit gamma (100 aa).

It belongs to the urease gamma subunit family. As to quaternary structure, heterotrimer of UreA (gamma), UreB (beta) and UreC (alpha) subunits. Three heterotrimers associate to form the active enzyme.

It localises to the cytoplasm. The enzyme catalyses urea + 2 H2O + H(+) = hydrogencarbonate + 2 NH4(+). Its pathway is nitrogen metabolism; urea degradation; CO(2) and NH(3) from urea (urease route): step 1/1. In Mycolicibacterium smegmatis (strain ATCC 700084 / mc(2)155) (Mycobacterium smegmatis), this protein is Urease subunit gamma.